A 338-amino-acid chain; its full sequence is Egl nine homolog 1 (338 aa).

Over residues 1–11 (PRAQPAPAQPR) the composition is skewed to low complexity. The disordered stretch occupies residues 1–99 (PRAQPAPAQP…PSGGLRPNGQ (99 aa)). A Phosphoserine modification is found at Ser52. S-nitrosocysteine occurs at positions 116 and 123. The tract at residues 156–166 (VSQKSDSSKDI) is beta(2)beta(3) 'finger-like' loop. In terms of domain architecture, Fe2OG dioxygenase spans 209–307 (GRTKAMVACY…RYAITVWYFD (99 aa)). Cys217 is modified (S-nitrosocysteine). 2 residues coordinate Fe cation: His228 and Asp230. Cys238 and Cys241 each carry S-nitrosocysteine. Position 289 (His289) interacts with Fe cation. Arg298 serves as a coordination point for 2-oxoglutarate.

As to quaternary structure, monomer. Interacts with ING4; the interaction inhibits the hydroxylation of HIF alpha proteins. Interacts with PTGES3 (via PXLE motif); thereby recruiting EGLN1 to the HSP90 pathway to facilitate HIF alpha proteins hydroxylation. Interacts with LIMD1. Found in a complex composed of LIMD1, VHL, EGLN1/PHD2, ELOB and CUL2. Interacts with EPAS1. Interacts with CBFA2T3 and HIF1A. It depends on Fe(2+) as a cofactor. L-ascorbate is required as a cofactor. S-nitrosylation inhibits the enzyme activity up to 60% under aerobic conditions. Chelation of Fe(2+) has no effect on the S-nitrosylation. It is uncertain whether nitrosylation occurs on Cys-238 or Cys-241. Expressed in heart, liver, kidney, brain, liver and testis. Highest levels in heart, lowest in liver.

Its subcellular location is the cytoplasm. It is found in the nucleus. The catalysed reaction is L-prolyl-[hypoxia-inducible factor alpha subunit] + 2-oxoglutarate + O2 = trans-4-hydroxy-L-prolyl-[hypoxia-inducible factor alpha subunit] + succinate + CO2. With respect to regulation, increased activation in hypoxia. Hydroxylation of the C-terminal ODD domain (CODD) proline of HIF1A is activated by cyclosporin A (CsA). In terms of biological role, cellular oxygen sensor that catalyzes, under normoxic conditions, the post-translational formation of 4-hydroxyproline in hypoxia-inducible factor (HIF) alpha proteins. Hydroxylates a specific proline found in each of the oxygen-dependent degradation (ODD) domains (N-terminal, NODD, and C-terminal, CODD) of HIF1A. Also hydroxylates HIF2A. Has a preference for the CODD site for both HIF1A and HIF1B. Hydroxylated HIFs are then targeted for proteasomal degradation via the von Hippel-Lindau ubiquitination complex. Under hypoxic conditions, the hydroxylation reaction is attenuated allowing HIFs to escape degradation resulting in their translocation to the nucleus, heterodimerization with HIF1B, and increased expression of hypoxy-inducible genes. EGLN1 is the most important isozyme under normoxia and, through regulating the stability of HIF1, involved in various hypoxia-influenced processes such as angiogenesis in retinal and cardiac functionality. Target proteins are preferentially recognized via a LXXLAP motif. The polypeptide is Egl nine homolog 1 (Egln1) (Rattus norvegicus (Rat)).